Consider the following 384-residue polypeptide: Dual specificity protein phosphatase 9 (384 aa).

Position 16 is a phosphoserine (S16). The 122-residue stretch at 18 to 139 folds into the Rhodanese domain; that stretch reads PRPRLLLLDC…FQAECPHLCE (122 aa). Positions 203-346 constitute a Tyrosine-protein phosphatase domain; that stretch reads FPVQILPNLY…LLDFERSLRL (144 aa). S262 bears the Phosphoserine mark. The Phosphocysteine intermediate role is filled by C290. The disordered stretch occupies residues 348 to 384; sequence ERHSQEQGSGGQASAASNPPSFFTTPTSDGAFELAPT. At S351 the chain carries Phosphoserine. Polar residues predominate over residues 359–375; sequence QASAASNPPSFFTTPTS.

Belongs to the protein-tyrosine phosphatase family. Non-receptor class dual specificity subfamily.

The protein resides in the cytoplasm. It carries out the reaction O-phospho-L-tyrosyl-[protein] + H2O = L-tyrosyl-[protein] + phosphate. It catalyses the reaction O-phospho-L-seryl-[protein] + H2O = L-seryl-[protein] + phosphate. The catalysed reaction is O-phospho-L-threonyl-[protein] + H2O = L-threonyl-[protein] + phosphate. In terms of biological role, inactivates MAP kinases. Has a specificity for the ERK family. In Homo sapiens (Human), this protein is Dual specificity protein phosphatase 9 (DUSP9).